The chain runs to 215 residues: Tail hub protein A (215 aa).

As to quaternary structure, heterotrimer with THB. The heterotrimers further assemble as 12 docking hubs that anchor the trimeric tail fibers.

The protein resides in the virion. Functionally, forms the tail hub together with tail hub protein B (THB). The chain is Tail hub protein A from Bacteroides phage crAss001 (Bacteroides phage PhiCrAss001).